The primary structure comprises 311 residues: N-acetylmuramic acid 6-phosphate etherase (311 aa).

Residues 66 to 229 (VAVRMARGGR…STITMIRLGK (164 aa)) enclose the SIS domain. The active-site Proton donor is glutamate 94. The active site involves glutamate 125.

It belongs to the GCKR-like family. MurNAc-6-P etherase subfamily. Homodimer.

It carries out the reaction N-acetyl-D-muramate 6-phosphate + H2O = N-acetyl-D-glucosamine 6-phosphate + (R)-lactate. It participates in amino-sugar metabolism; N-acetylmuramate degradation. In terms of biological role, specifically catalyzes the cleavage of the D-lactyl ether substituent of MurNAc 6-phosphate, producing GlcNAc 6-phosphate and D-lactate. In Streptomyces coelicolor (strain ATCC BAA-471 / A3(2) / M145), this protein is N-acetylmuramic acid 6-phosphate etherase.